The following is a 353-amino-acid chain: Beta-hexosaminidase (353 aa).

Residues Asp74, Arg82, Arg149, and 179–180 (KH) contribute to the substrate site. His192 (proton donor/acceptor) is an active-site residue. Asp263 serves as the catalytic Nucleophile.

This sequence belongs to the glycosyl hydrolase 3 family. NagZ subfamily.

The protein localises to the cytoplasm. The catalysed reaction is Hydrolysis of terminal non-reducing N-acetyl-D-hexosamine residues in N-acetyl-beta-D-hexosaminides.. It functions in the pathway cell wall biogenesis; peptidoglycan recycling. In terms of biological role, plays a role in peptidoglycan recycling by cleaving the terminal beta-1,4-linked N-acetylglucosamine (GlcNAc) from peptide-linked peptidoglycan fragments, giving rise to free GlcNAc, anhydro-N-acetylmuramic acid and anhydro-N-acetylmuramic acid-linked peptides. In Bordetella bronchiseptica (strain ATCC BAA-588 / NCTC 13252 / RB50) (Alcaligenes bronchisepticus), this protein is Beta-hexosaminidase.